The primary structure comprises 478 residues: Protein nucleotidyltransferase YdiU (478 aa).

ATP is bound by residues Gly84, Gly86, Arg87, Lys107, Asp119, Gly120, Arg170, and Arg177. The active-site Proton acceptor is Asp246. The Mg(2+) site is built by Asn247 and Asp256. Asp256 contributes to the ATP binding site.

Belongs to the SELO family. The cofactor is Mg(2+). Requires Mn(2+) as cofactor.

The catalysed reaction is L-seryl-[protein] + ATP = 3-O-(5'-adenylyl)-L-seryl-[protein] + diphosphate. It carries out the reaction L-threonyl-[protein] + ATP = 3-O-(5'-adenylyl)-L-threonyl-[protein] + diphosphate. The enzyme catalyses L-tyrosyl-[protein] + ATP = O-(5'-adenylyl)-L-tyrosyl-[protein] + diphosphate. It catalyses the reaction L-histidyl-[protein] + UTP = N(tele)-(5'-uridylyl)-L-histidyl-[protein] + diphosphate. The catalysed reaction is L-seryl-[protein] + UTP = O-(5'-uridylyl)-L-seryl-[protein] + diphosphate. It carries out the reaction L-tyrosyl-[protein] + UTP = O-(5'-uridylyl)-L-tyrosyl-[protein] + diphosphate. In terms of biological role, nucleotidyltransferase involved in the post-translational modification of proteins. It can catalyze the addition of adenosine monophosphate (AMP) or uridine monophosphate (UMP) to a protein, resulting in modifications known as AMPylation and UMPylation. The sequence is that of Protein nucleotidyltransferase YdiU from Escherichia coli (strain SE11).